The chain runs to 273 residues: Cilia- and flagella-associated protein 298-B (273 aa).

It belongs to the CFAP298 family.

The protein resides in the cytoplasm. It localises to the cytoskeleton. The protein localises to the cilium basal body. Plays a role in motile cilium function, possibly by acting on outer dynein arm assembly. Seems to be important for initiation rather than maintenance of cilium motility. Required for correct positioning of the cilium at the apical cell surface, suggesting an additional role in the planar cell polarity (PCP) pathway. May suppress canonical Wnt signaling activity. This chain is Cilia- and flagella-associated protein 298-B (cfap298-b), found in Xenopus laevis (African clawed frog).